The following is a 91-amino-acid chain: Small ribosomal subunit protein uS19c (91 aa).

The protein belongs to the universal ribosomal protein uS19 family.

The protein resides in the plastid. Its subcellular location is the organellar chromatophore. Functionally, protein S19 forms a complex with S13 that binds strongly to the 16S ribosomal RNA. This is Small ribosomal subunit protein uS19c from Paulinella chromatophora.